Consider the following 121-residue polypeptide: UPF0102 protein AAur_2443 (121 aa).

This sequence belongs to the UPF0102 family.

The polypeptide is UPF0102 protein AAur_2443 (Paenarthrobacter aurescens (strain TC1)).